We begin with the raw amino-acid sequence, 263 residues long: 4-hydroxy-2-oxo-heptane-1,7-dioate aldolase (263 aa).

The Proton acceptor role is filled by His45. Position 147 (Gln147) interacts with substrate. Residue Glu149 coordinates a divalent metal cation. Substrate-binding residues include Ala174 and Asp175. An a divalent metal cation-binding site is contributed by Asp175.

The protein belongs to the HpcH/HpaI aldolase family. As to quaternary structure, homohexamer; trimer of dimers. A divalent metal cation is required as a cofactor.

The enzyme catalyses 4-hydroxy-2-oxoheptanedioate = succinate semialdehyde + pyruvate. It functions in the pathway aromatic compound metabolism; 4-hydroxyphenylacetate degradation; pyruvate and succinate semialdehyde from 4-hydroxyphenylacetate: step 7/7. Functionally, catalyzes the reversible retro-aldol cleavage of 4-hydroxy-2-ketoheptane-1,7-dioate (HKHD) to pyruvate and succinic semialdehyde. The protein is 4-hydroxy-2-oxo-heptane-1,7-dioate aldolase of Salmonella paratyphi A (strain ATCC 9150 / SARB42).